A 124-amino-acid chain; its full sequence is Apolipoprotein C-IV (124 aa).

The N-terminal stretch at 1–27 is a signal peptide; that stretch reads MSLLRCRQQTLPSLCLSVLFLACFVAS.

This sequence belongs to the apolipoprotein C4 family.

The protein resides in the secreted. In terms of biological role, may participate in lipoprotein metabolism. This chain is Apolipoprotein C-IV (Apoc4), found in Rattus norvegicus (Rat).